A 701-amino-acid polypeptide reads, in one-letter code: Sulfate anion transporter 1 (701 aa).

Positions 1–20 are disordered; the sequence is MDESPEPLQQGRGPVPVRRQ. The next 2 membrane-spanning stretches (helical) occupy residues 68–90 and 94–116; these read YLAG…AIAY and AGLQ…FLMG. Asparagine 158 and asparagine 163 each carry an N-linked (GlcNAc...) asparagine glycan. 7 consecutive transmembrane segments (helical) span residues 176–198, 255–277, 290–309, 342–364, 377–399, 412–434, and 472–494; these read YAIR…MGVL, GAGQ…LLAA, VPLP…SHFG, ALDA…EMFA, LLAV…SAAL, TQLS…APLF, and LVWA…LAGV. The STAS domain maps to 527 to 687; sequence EFEGLVPEPG…LSVHDAVQTA (161 aa).

It belongs to the SLC26A/SulP transporter (TC 2.A.53) family. As to expression, expressed most abundantly in the kidney and liver, with lower levels in the pancreas, testis, brain, small intestine, colon, and lung.

It is found in the cell membrane. Its subcellular location is the basolateral cell membrane. It catalyses the reaction thiosulfate(in) + sulfate(out) = thiosulfate(out) + sulfate(in). The enzyme catalyses 2 hydrogencarbonate(out) + sulfate(in) = 2 hydrogencarbonate(in) + sulfate(out). It carries out the reaction oxalate(in) + sulfate(out) = oxalate(out) + sulfate(in). The catalysed reaction is oxalate(in) + 2 hydrogencarbonate(out) = oxalate(out) + 2 hydrogencarbonate(in). Sodium-independent sulfate anion transporter. Can transport other anions including bicarbonate, thiosulfate and oxalate by mediating sulfate-thiosulfate, sulfate-hydrogencarbonate and sulfate-oxalate anion exchange. Mediates oxalate-hydrogencarbonate anion exchange. This Homo sapiens (Human) protein is Sulfate anion transporter 1 (SLC26A1).